A 633-amino-acid chain; its full sequence is Replication protein E1 (633 aa).

The Nuclear localization signal signature appears at 84–86 (KRK). Phosphoserine; by host is present on residues serine 90, serine 94, and serine 108. The short motif at 107-116 (LSPRLGAISL) is the Nuclear export signal element. The tract at residues 148–168 (NTEGTDETETDQVQTVSGETT) is disordered. Over residues 158 to 168 (DQVQTVSGETT) the composition is skewed to polar residues. Residues 169 to 335 (TDSLGRQQIT…QTVIEYSLAD (167 aa)) form a DNA-binding region region. Residues 434–584 (VDFISFMIAL…FPFDSNGNPV (151 aa)) enclose the SF3 helicase domain. ATP is bound at residue 460–467 (GPPDTGKS). A Glycyl lysine isopeptide (Lys-Gly) (interchain with G-Cter in SUMO) cross-link involves residue lysine 541. The tract at residues 609 to 633 (DNEEEENGDPSNTFRCVPGKASRPI) is disordered.

This sequence belongs to the papillomaviridae E1 protein family. In terms of assembly, can form hexamers. Interacts with E2 protein; this interaction increases E1 DNA binding specificity. Interacts with host DNA polymerase subunit POLA2. Interacts with host single stranded DNA-binding protein RPA1. Interacts with host TOP1; this interaction stimulates the enzymatic activity of TOP1. Phosphorylated. Post-translationally, sumoylated.

The protein localises to the host nucleus. The catalysed reaction is Couples ATP hydrolysis with the unwinding of duplex DNA by translocating in the 3'-5' direction.. It catalyses the reaction ATP + H2O = ADP + phosphate + H(+). In terms of biological role, ATP-dependent DNA 3'-5' helicase required for initiation of viral DNA replication. It forms a complex with the viral E2 protein. The E1-E2 complex binds to the replication origin which contains binding sites for both proteins. During the initial step, a dimer of E1 interacts with a dimer of protein E2 leading to a complex that binds the viral origin of replication with high specificity. Then, a second dimer of E1 displaces the E2 dimer in an ATP-dependent manner to form the E1 tetramer. Following this, two E1 monomers are added to each half of the site, which results in the formation of two E1 trimers on the viral ori. Subsequently, two hexamers will be created. The double hexamer acts as a bi-directional helicase machinery and unwinds the viral DNA and then recruits the host DNA polymerase to start replication. This chain is Replication protein E1, found in Homo sapiens (Human).